Reading from the N-terminus, the 304-residue chain is Putative dihydroorotate dehydrogenase A (fumarate) (304 aa).

Residues Ser21 and 45-46 (KS) each bind FMN. Substrate contacts are provided by residues Lys45, 69–73 (NAVGL), and Asn129. An FMN-binding site is contributed by Asn129. The active-site Nucleophile is the Cys132. Lys168 and Ile194 together coordinate FMN. 195–196 (NT) contacts substrate. FMN contacts are provided by residues Gly220, 246 to 247 (GG), and 268 to 269 (GS).

This sequence belongs to the dihydroorotate dehydrogenase family. Type 1 subfamily. In terms of assembly, homodimer. FMN serves as cofactor.

Its subcellular location is the cytoplasm. The enzyme catalyses (S)-dihydroorotate + fumarate = orotate + succinate. Its pathway is pyrimidine metabolism; UMP biosynthesis via de novo pathway. In terms of biological role, catalyzes the conversion of dihydroorotate to orotate with fumarate as the electron acceptor. This Pediococcus pentosaceus (strain ATCC 25745 / CCUG 21536 / LMG 10740 / 183-1w) protein is Putative dihydroorotate dehydrogenase A (fumarate) (pyrD).